The sequence spans 916 residues: Inter-alpha-trypsin inhibitor heavy chain H4 (916 aa).

A signal peptide spans 1–27 (MKTPAPGRIHSIVLVLLSLAVLQTSKA). The VIT domain maps to 28 to 149 (QKVQNDIDIY…KVTFELVYEE (122 aa)). Asn-82 and Asn-208 each carry an N-linked (GlcNAc...) asparagine glycan. The VWFA domain maps to 275 to 458 (NVIFVIDKSG…LQLQDFYQEV (184 aa)). A glycan (N-linked (GlcNAc...) asparagine) is linked at Asn-518. Disordered regions lie at residues 597 to 616 (PEGQEQSQVAEKPVEDESRG) and 678 to 701 (PLAPASAPSPTSGPGGASHDTDFR). The segment covering 678-689 (PLAPASAPSPTS) has biased composition (low complexity). Residue Ser-683 is glycosylated (O-linked (GalNAc...) serine). O-linked (GalNAc...) threonine glycans are attached at residues Thr-705, Thr-706, and Thr-708. The cysteines at positions 733 and 911 are disulfide-linked.

The protein belongs to the ITIH family. Interacts (via C-terminus) with DNAJC1 (via SANT 2 domain). In terms of processing, appears to be both N- and O-glycosylated.

It localises to the secreted. In terms of biological role, type II acute-phase protein (APP) involved in inflammatory responses to trauma. May also play a role in liver development or regeneration. This is Inter-alpha-trypsin inhibitor heavy chain H4 (ITIH4) from Bos taurus (Bovine).